We begin with the raw amino-acid sequence, 211 residues long: Thymidylate kinase (211 aa).

ATP is bound at residue Gly-11 to Thr-18.

It belongs to the thymidylate kinase family.

It carries out the reaction dTMP + ATP = dTDP + ADP. Phosphorylation of dTMP to form dTDP in both de novo and salvage pathways of dTTP synthesis. This chain is Thymidylate kinase, found in Streptococcus pyogenes serotype M1.